The chain runs to 473 residues: MSDFMTEQEFRIEHDTMGEVKVPAQALWRAQTQRAVENFPISGRGLESAQIRAMGLLKAACAQVNKDSGALDAAKADAIIAAGKEIATGKHDAEFPIDVFQTGSGTSSNMNTNEVIASIAKANGTEVHPNDDVNMGQSSNDTFPTATHVAATEAAVNDLIPGLKVLHESLAKKANEWDSVVKSGRTHLMDAVPVTLGQEFGGYARQIQLGIERIEATLPRLGELAIGGTAVGTGINTSADFGGKVVAELVELTGVTQLQEAANHFEAQANRDALVEFSGAMRVVAVSLYKIANDIRLMGSGPLTGLGEIQLPDLQPGSSIMPGKVNPVLCETATQVSAQVIGNDAAVAFAGSQGQFELNVFIPVMARNVLESARLLANTARVFATRLVDGIVPNEEHMKQLAESSPSIVTPLNSAIGYEAAAKVAKAALAEGKTIRQTVIDMGFVDGEKLTEEELDKRLDVLAMANTDRKQKF.

Substrate contacts are provided by residues 104–106, 128–131, 138–140, and Thr-186; these read SGT, HPND, and SSN. The active-site Proton donor/acceptor is the His-187. Ser-318 is an active-site residue. Residues Ser-319 and 324 to 326 each bind substrate; that span reads KVN.

It belongs to the class-II fumarase/aspartase family. Fumarase subfamily. As to quaternary structure, homotetramer.

The protein resides in the cytoplasm. The catalysed reaction is (S)-malate = fumarate + H2O. It functions in the pathway carbohydrate metabolism; tricarboxylic acid cycle; (S)-malate from fumarate: step 1/1. Functionally, involved in the TCA cycle. Catalyzes the stereospecific interconversion of fumarate to L-malate. The protein is Fumarate hydratase class II of Corynebacterium efficiens (strain DSM 44549 / YS-314 / AJ 12310 / JCM 11189 / NBRC 100395).